The primary structure comprises 223 residues: 7-carboxy-7-deazaguanine synthase (223 aa).

Substrate contacts are provided by residues 12–14 (LQG) and R27. Positions 18–223 (FTGVPAIFIR…MQTHKYLNIA (206 aa)) constitute a Radical SAM core domain. [4Fe-4S] cluster-binding residues include C31, C35, and C38. Residue T40 coordinates Mg(2+). Residue T92 participates in substrate binding. S-adenosyl-L-methionine-binding positions include G94 and 136-138 (SPK).

The protein belongs to the radical SAM superfamily. 7-carboxy-7-deazaguanine synthase family. As to quaternary structure, homodimer. [4Fe-4S] cluster is required as a cofactor. The cofactor is S-adenosyl-L-methionine. Requires Mg(2+) as cofactor.

It carries out the reaction 6-carboxy-5,6,7,8-tetrahydropterin + H(+) = 7-carboxy-7-deazaguanine + NH4(+). The protein operates within purine metabolism; 7-cyano-7-deazaguanine biosynthesis. Functionally, catalyzes the complex heterocyclic radical-mediated conversion of 6-carboxy-5,6,7,8-tetrahydropterin (CPH4) to 7-carboxy-7-deazaguanine (CDG), a step common to the biosynthetic pathways of all 7-deazapurine-containing compounds. The chain is 7-carboxy-7-deazaguanine synthase from Escherichia coli (strain K12).